Consider the following 243-residue polypeptide: UPF0758 protein alr2351 (243 aa).

The 123-residue stretch at 113–235 (PIDSPVAAVA…HQSLREITTL (123 aa)) folds into the MPN domain. Zn(2+) contacts are provided by H184, H186, and D197. The short motif at 184–197 (HNHPSGNVEPSPED) is the JAMM motif element.

This sequence belongs to the UPF0758 family.

In Nostoc sp. (strain PCC 7120 / SAG 25.82 / UTEX 2576), this protein is UPF0758 protein alr2351.